A 1561-amino-acid chain; its full sequence is Sterile alpha motif domain-containing protein 9-like (1561 aa).

The region spanning 14–79 (WTKEHVRKWV…RMYNKLISSP (66 aa)) is the SAM domain. Residues 78–157 (SPESHNQDSR…DNKPKPEQMS (80 aa)) form a disordered region. 2 stretches are compositionally biased toward basic and acidic residues: residues 82-107 (HNQD…KNEE) and 142-153 (VTKDMEDNKPKP).

In terms of assembly, interacts with EEA1.

The protein localises to the early endosome. Its subcellular location is the mitochondrion. May be involved in endosome fusion. Mediates down-regulation of growth factor signaling via internalization of growth factor receptors. The polypeptide is Sterile alpha motif domain-containing protein 9-like (Samd9l) (Mus musculus (Mouse)).